Consider the following 333-residue polypeptide: Receptor polysaccharide phosphotransferase WefC (333 aa).

The protein belongs to the stealth family.

Functionally, part of the type 2Gn receptor polysaccharide (RPS) biosynthesis locus. Essential for cell surface RPS production, and for synthesis of the host-like GalNAc beta 1-3Gal (Gn) motif of the RPS. Probably encodes a 1-3Gal alpha transferase. This Streptococcus gordonii protein is Receptor polysaccharide phosphotransferase WefC (wefC).